The chain runs to 316 residues: Metal tolerance protein 8 (316 aa).

At Met1 to Lys15 the chain is on the cytoplasmic side. A helical transmembrane segment spans residues Ile16–Met36. Over Ser37–Asp45 the chain is Vacuolar. Residues Ala46–Ala66 traverse the membrane as a helical segment. The Cytoplasmic portion of the chain corresponds to Arg67 to Arg80. The chain crosses the membrane as a helical span at residues Phe81–Val101. Residues Leu102–Thr116 are Vacuolar-facing. Residues Ser117–Phe137 traverse the membrane as a helical segment. At His138–Gly176 the chain is on the cytoplasmic side. The tract at residues Glu147–Asn166 is disordered. A helical membrane pass occupies residues Ile177–Leu197. Over Ile198–Gly202 the chain is Vacuolar. The chain crosses the membrane as a helical span at residues Trp203–Leu223. The Cytoplasmic segment spans residues Pro224–Arg316.

Belongs to the cation diffusion facilitator (CDF) transporter (TC 2.A.4) family. SLC30A subfamily.

The protein localises to the vacuole membrane. Involved in sequestration of excess metal in the cytoplasm into vacuoles to maintain metal homeostasis. This is Metal tolerance protein 8 (MTP8) from Oryza sativa subsp. japonica (Rice).